We begin with the raw amino-acid sequence, 563 residues long: Coiled-coil domain-containing protein 38 (563 aa).

Over residues 1-11 the composition is skewed to polar residues; it reads MSSNLLPTLNS. A disordered region spans residues 1–21; it reads MSSNLLPTLNSGGKVKDGSTK. The stretch at 129 to 212 forms a coiled coil; that stretch reads KRNTIKKFEK…VKSEIAKTEF (84 aa). Residues 272–311 form a disordered region; the sequence is ESGRTAVLSEDASQGRDSQGKPSRSLTRTPEKKKSNLAES. Positions 282–299 are enriched in polar residues; the sequence is DASQGRDSQGKPSRSLTR. 2 coiled-coil regions span residues 384–415 and 497–522; these read NIEF…KSKL and RDEK…AVAQ. The segment at 522–563 is disordered; the sequence is QPKKKLGRRLVFHSKPPSGNKQQLPLVNETKTKSQEEEYFFT. Basic residues predominate over residues 523–533; the sequence is PKKKLGRRLVF.

In terms of assembly, interacts with CCDC42, CFAP53, IFT88 and ODF2. Interacts with CCDC146. Interacts with TEKT3. Interacts with ubiquitinated histone H2A.

It localises to the cytoplasm. It is found in the cytoskeleton. The protein localises to the microtubule organizing center. Its subcellular location is the centrosome. The protein resides in the perinuclear region. It localises to the cell projection. It is found in the cilium. The protein localises to the flagellum. Functionally, essential for male fertility. Required for sperm flagellum biogenesis. Also required for acrosome biogenesis. Required for the attachment of developing acrosomes to the nucleus during spermiogenesis and may be involved in the transport of fibrous sheath components. The protein is Coiled-coil domain-containing protein 38 (CCDC38) of Homo sapiens (Human).